The primary structure comprises 214 residues: GTP-binding nuclear protein GSP1/Ran (214 aa).

The Small GTPase Ran-type domain occupies 4 to 168 (EVPTFKLVLV…LWLARKLAGN (165 aa)). 15 to 22 (DGGTGKTT) contributes to the GTP binding site. Positions 34–42 (KKYIATIGV) are switch-I. GTP-binding positions include Gly65, 119 to 122 (NKVD), and 147 to 149 (SAK). The tract at residues 65-81 (GQEKFGGLRDGYYINAQ) is switch-II.

This sequence belongs to the small GTPase superfamily. Ran family. Found in a nuclear export complex with RanGTP, exportin and pre-miRNA.

The protein localises to the nucleus. Functionally, GTP-binding protein involved in nucleocytoplasmic transport. Required for the import of protein into the nucleus and also for RNA export. Involved in chromatin condensation and control of cell cycle. This chain is GTP-binding nuclear protein GSP1/Ran (GSP1), found in Candida glabrata (strain ATCC 2001 / BCRC 20586 / JCM 3761 / NBRC 0622 / NRRL Y-65 / CBS 138) (Yeast).